The following is a 776-amino-acid chain: MLPGCIFLMILLILQVKEKVILGVEGQQLVYPKKLPLMQKRDIGHTHDDDIEETYEEELMYEIKLNRKTLVLHLLRSREFLGSNYSETFYSMKGEAFTRHLQIMDHCFYQGSIVHEYDSAASISTCNGLRGFFRVNDQRYLIEPVKYSDEGEHLVFKYNPRVPYVANYSCTELNFTRKTVPGDTESEGDPKMKAIHNEKYIELFIVADDTVYRRNSHPHNKLRNRIWGMVNFVNMIYKTLNIHVTLVGIEIWTHEDKIELHSNIETTLLRFSSWQERILKTRKDFDHVVLLSGKWIYTHVQGISYPAGMCLPYYSTSIIKDLLPDTNIIANRMAHQLGHNLGMQHDEFPCTCPSGKCVMDSDGSIPALKFSKCSQNQYHQYLKDYKPTCMLNIPFPCNFDDFQFCGNKKLDEGEECDCGPPQECTNPCCDAHTCVLKPGFTCAEGECCESCQIKKAGSICRPAEDECDFPEMCTGHSPACPKDQFRVNGFPCKNSEGYCFMGKCPTRRDQCSELFDDEATESHDICYKMNTKGNKFGYCKNKENRFLPCEEKDVRCGKIYCTGGELSYLLGEDKTYHLKDPQQNATVKCKTIFLYHDSTDIGLVASGTKCGDGMVCNNGECLNMEKVYNSTNCPSQCHENPMDDHGLQCHCEEGQAPVAWEETLNVTNVAILIVVLVLVIVGIGVLILLIRYQKCIKLKQVQSPPIETLGVENKGYFGDEQQMRTEPILPEIHFLNQRTPESLESLPTSFSSPHYITLKPASKDSRGIADPNQSAK.

A signal peptide spans 1–23 (MLPGCIFLMILLILQVKEKVILG). Positions 24–176 (VEGQQLVYPK…NYSCTELNFT (153 aa)) are excised as a propeptide. The Extracellular segment spans residues 26-669 (GQQLVYPKKL…WEETLNVTNV (644 aa)). 3 N-linked (GlcNAc...) asparagine glycosylation sites follow: N84, N167, and N174. A Peptidase M12B domain is found at 199–394 (KYIELFIVAD…YKPTCMLNIP (196 aa)). 4 cysteine pairs are disulfide-bonded: C310/C389, C350/C373, C352/C357, and C460/C480. Residues 402 to 488 (FQFCGNKKLD…ACPKDQFRVN (87 aa)) form the Disintegrin domain. N584, N629, and N665 each carry an N-linked (GlcNAc...) asparagine glycan. Residues 670-690 (AILIVVLVLVIVGIGVLILLI) traverse the membrane as a helical segment. Over 691–776 (RYQKCIKLKQ…GIADPNQSAK (86 aa)) the chain is Cytoplasmic. The segment at 757–776 (TLKPASKDSRGIADPNQSAK) is disordered.

Interacts with ITM2B in sperm; the interaction increases following capacitation. Interacts with HSPA5 and CANX.

The protein localises to the membrane. Required for normal male fertility via maintenance of epithelial cell morphology in the caput epididymis and subsequently correct epididymis lumen structure required for sperm development. Plays a role in sperm motility, flagella morphology and tyrosine phosphorylation during sperm capacitance. Plays a role in normal expression levels of HSPA5, ITM2B and ADAM2 in sperm both prior to and post-capacitation. This is a non catalytic metalloprotease-like protein. This is Disintegrin and metalloproteinase domain-containing protein 7 (ADAM7) from Macaca fascicularis (Crab-eating macaque).